A 632-amino-acid chain; its full sequence is Extracellular metalloproteinase 1 (632 aa).

The first 19 residues, 1–19 (MHGLLLAAGLLSLPLRVLA), serve as a signal peptide directing secretion. The propeptide occupies 20-243 (HPQPSTSLTS…VHNVVDYVSH (224 aa)). An N-linked (GlcNAc...) asparagine glycan is attached at asparagine 284. Histidine 427 lines the Zn(2+) pocket. Glutamate 428 is an active-site residue. Residue histidine 431 participates in Zn(2+) binding. 2 N-linked (GlcNAc...) asparagine glycosylation sites follow: asparagine 591 and asparagine 620.

The protein belongs to the peptidase M36 family. It depends on Zn(2+) as a cofactor.

Its subcellular location is the secreted. In terms of biological role, secreted metalloproteinase that allows assimilation of proteinaceous substrates and probably acts as a virulence factor. This chain is Extracellular metalloproteinase 1 (MEP1), found in Arthroderma gypseum (strain ATCC MYA-4604 / CBS 118893) (Microsporum gypseum).